A 159-amino-acid polypeptide reads, in one-letter code: Fimbrial protein MyfA (159 aa).

The signal sequence occupies residues 1 to 29; the sequence is MNMKKFVKKPLAIAVLMLASGGMVNMVHA.

As to quaternary structure, forms a homomer composed of subunits assembled in a large structure resistant to proteases and chaotropic agents.

The protein resides in the fimbrium. In terms of biological role, major pilus subunit. Expressed only in pathogenic serotypes, it is part of myf, a probable virulence factor. In Yersinia enterocolitica, this protein is Fimbrial protein MyfA (myfA).